Reading from the N-terminus, the 240-residue chain is Uridylate kinase (240 aa).

13–16 (KASG) lines the ATP pocket. An involved in allosteric activation by GTP region spans residues 21-26 (GAQGFG). Gly-55 contributes to the UMP binding site. Gly-56 and Arg-60 together coordinate ATP. UMP is bound by residues Asp-75 and 136–143 (TGNPFFTT). ATP-binding residues include Thr-163, Gln-164, Tyr-169, and Asp-172.

This sequence belongs to the UMP kinase family. Homohexamer.

Its subcellular location is the cytoplasm. It catalyses the reaction UMP + ATP = UDP + ADP. Its pathway is pyrimidine metabolism; CTP biosynthesis via de novo pathway; UDP from UMP (UMPK route): step 1/1. Allosterically activated by GTP. Inhibited by UTP. Its function is as follows. Catalyzes the reversible phosphorylation of UMP to UDP. The protein is Uridylate kinase of Rhizobium etli (strain ATCC 51251 / DSM 11541 / JCM 21823 / NBRC 15573 / CFN 42).